A 443-amino-acid chain; its full sequence is GTPase Der (443 aa).

EngA-type G domains lie at 3 to 168 and 178 to 353; these read PLLA…PEAP and VHLA…RNRS. Residues 9–16, 56–60, 120–123, 184–191, 231–235, and 296–299 each bind GTP; these read GRPNVGKS, DTGGY, NKVE, DTAGL, and NKWD. The 85-residue stretch at 354-438 folds into the KH-like domain; the sequence is QNVSTSQLNK…PISLRFLHKN (85 aa).

This sequence belongs to the TRAFAC class TrmE-Era-EngA-EngB-Septin-like GTPase superfamily. EngA (Der) GTPase family. As to quaternary structure, associates with the 50S ribosomal subunit.

Functionally, GTPase that plays an essential role in the late steps of ribosome biogenesis. This chain is GTPase Der, found in Chlorobium chlorochromatii (strain CaD3).